The sequence spans 75 residues: MEKLTILLLVAAVLMSTQALIQRGGAKRRKVNFFSIREPGAEDWREGNCTPWLGGCTSPEECCPGNCETYCRAWR.

The first 19 residues, 1-19 (MEKLTILLLVAAVLMSTQA), serve as a signal peptide directing secretion. Residues 20-45 (LIQRGGAKRRKVNFFSIREPGAEDWR) constitute a propeptide that is removed on maturation. 3 cysteine pairs are disulfide-bonded: Cys-49/Cys-63, Cys-56/Cys-67, and Cys-62/Cys-71.

It belongs to the conotoxin O2 superfamily. As to expression, expressed by the venom duct.

The protein localises to the secreted. This chain is Conotoxin TsMEKL-011, found in Conus tessulatus (Tessellate cone).